The chain runs to 166 residues: Lipoprotein signal peptidase (166 aa).

A run of 3 helical transmembrane segments spans residues 12–32 (LPIA…KYLV), 66–86 (MEGW…LWLW), and 101–121 (AMII…GYVI). Active-site residues include Asp122 and Asp140. Residues 132 to 152 (SFAVFNLADSFITVGAGAIIL) traverse the membrane as a helical segment.

The protein belongs to the peptidase A8 family.

The protein localises to the cell inner membrane. It carries out the reaction Release of signal peptides from bacterial membrane prolipoproteins. Hydrolyzes -Xaa-Yaa-Zaa-|-(S,diacylglyceryl)Cys-, in which Xaa is hydrophobic (preferably Leu), and Yaa (Ala or Ser) and Zaa (Gly or Ala) have small, neutral side chains.. It participates in protein modification; lipoprotein biosynthesis (signal peptide cleavage). Functionally, this protein specifically catalyzes the removal of signal peptides from prolipoproteins. This chain is Lipoprotein signal peptidase, found in Sinorhizobium fredii (strain NBRC 101917 / NGR234).